We begin with the raw amino-acid sequence, 98 residues long: C-X-C motif chemokine 10 (98 aa).

Residues 1-21 (MNPSAAVVLCLVLLSLSGTQG) form the signal peptide. The residue at position 26 (Arg-26) is a Citrulline. 2 cysteine pairs are disulfide-bonded: Cys-30–Cys-57 and Cys-32–Cys-74.

The protein belongs to the intercrine alpha (chemokine CxC) family. Monomer, dimer, and tetramer. Interacts with CXCR3 (via N-terminus). In terms of tissue distribution, in the central nervous system, CXCL10 is predominantly localized to activated neurons. Expressed in both microglia and astrocytes.

It localises to the secreted. Pro-inflammatory cytokine that is involved in a wide variety of processes such as chemotaxis, differentiation, and activation of peripheral immune cells, regulation of cell growth, apoptosis and modulation of angiostatic effects. Plays thereby an important role during viral infections by stimulating the activation and migration of immune cells to the infected sites. Mechanistically, binding of CXCL10 to the CXCR3 receptor activates G protein-mediated signaling and results in downstream activation of phospholipase C-dependent pathway, an increase in intracellular calcium production and actin reorganization. In turn, recruitment of activated Th1 lymphocytes occurs at sites of inflammation. Activation of the CXCL10/CXCR3 axis also plays an important role in neurons in response to brain injury for activating microglia, the resident macrophage population of the central nervous system, and directing them to the lesion site. This recruitment is an essential element for neuronal reorganization. This chain is C-X-C motif chemokine 10 (Cxcl10), found in Rattus norvegicus (Rat).